A 2603-amino-acid chain; its full sequence is Protein SABRE (2603 aa).

Positions 1–35 (MAASPAKFFFGFLIVSIVLWMIFMLFAWMLSRVLG) are cleaved as a signal peptide. N-linked (GlcNAc...) asparagine glycosylation is present at Asn196. Residues 259–287 (FPKSKQSSASLRSDEVRTSATAASSAKKP) are disordered. N-linked (GlcNAc...) asparagine glycans are attached at residues Asn331, Asn486, Asn597, Asn807, Asn867, Asn887, Asn1154, Asn1249, Asn1280, and Asn1408. Positions 786-814 (PESGCNKGISSVKDGGPSEKINQSNSVNK) are disordered. The disordered stretch occupies residues 1416 to 1436 (FHQSPSSTEHPTDVGTVYSSQ). N-linked (GlcNAc...) asparagine glycans are attached at residues Asn1492 and Asn1659. Disordered regions lie at residues 1656-1676 (EFEN…DDDG) and 1717-1777 (EPPK…DDIG). The span at 1731–1748 (KIHEENQKESCPETHQGE) shows a compositional bias: basic and acidic residues. A compositionally biased stretch (polar residues) spans 1749–1766 (MSRSSASPGRNLPSSPSH). The stretch at 1995 to 2023 (VEEVELAKINLEEKERERKLLLDDIRKLS) forms a coiled coil. Residue Asn2333 is glycosylated (N-linked (GlcNAc...) asparagine). Disordered regions lie at residues 2339–2380 (EQQE…RPRK), 2448–2479 (GKKF…KPDQ), and 2554–2603 (IRRH…DFRE). Residues 2343–2380 (DFSKQKVKEIKPVKSGRSSHEEKKAGKSHEEKKSRPRK) are compositionally biased toward basic and acidic residues. A glycan (N-linked (GlcNAc...) asparagine) is linked at Asn2467. The span at 2554 to 2565 (IRRHTKKFRPRS) shows a compositional bias: basic residues. Residues 2566 to 2583 (QRGSTSQQRESLPSSPIE) show a composition bias toward polar residues. A compositionally biased stretch (low complexity) spans 2586–2603 (PFESGYSSGSSPYEDFRE).

The protein belongs to the SABRE family. In terms of tissue distribution, highest levels in leaves, also expressed in leaves, flowers, and siliques, and, to a lower extent, in roots and stems.

The protein resides in the secreted. Its subcellular location is the golgi apparatus. In terms of biological role, may be involved in membrane trafficking. Required for cell expansion, especially in root cortex, probably by counteracting the action of ethylene in promoting cells radial expansion. Involved in female organ development. Antagonistically interacts with ethylene signaling to regulate plant responses to Pi starvation. This is Protein SABRE from Arabidopsis thaliana (Mouse-ear cress).